Consider the following 38-residue polypeptide: Large ribosomal subunit protein bL36 (38 aa).

Belongs to the bacterial ribosomal protein bL36 family.

The sequence is that of Large ribosomal subunit protein bL36 from Anaeromyxobacter dehalogenans (strain 2CP-1 / ATCC BAA-258).